The sequence spans 238 residues: Membrane protein 2 (238 aa).

It belongs to the varicellovirus ORF2 protein family. Phosphorylated by host.

The protein localises to the host membrane. The protein is Membrane protein 2 of Varicella-zoster virus (strain Dumas) (HHV-3).